The primary structure comprises 664 residues: Glycine--tRNA ligase beta subunit (664 aa).

Belongs to the class-II aminoacyl-tRNA synthetase family. In terms of assembly, tetramer of two alpha and two beta subunits.

The protein resides in the cytoplasm. The enzyme catalyses tRNA(Gly) + glycine + ATP = glycyl-tRNA(Gly) + AMP + diphosphate. In Rickettsia felis (strain ATCC VR-1525 / URRWXCal2) (Rickettsia azadi), this protein is Glycine--tRNA ligase beta subunit.